Reading from the N-terminus, the 343-residue chain is 2-deoxy-scyllo-inosamine dehydrogenase (343 aa).

Cys37, His59, Cys91, Cys94, Cys97, Cys105, and Glu146 together coordinate Zn(2+).

This sequence belongs to the zinc-containing alcohol dehydrogenase family. DOIA dehydrogenase subfamily. Requires Zn(2+) as cofactor.

It catalyses the reaction 2-deoxy-scyllo-inosamine + NADP(+) = 3-amino-2,3-dideoxy-scyllo-inosose + NADPH + H(+). It carries out the reaction 2-deoxy-scyllo-inosamine + NAD(+) = 3-amino-2,3-dideoxy-scyllo-inosose + NADH + H(+). It functions in the pathway metabolic intermediate biosynthesis; 2-deoxystreptamine biosynthesis; 2-deoxystreptamine from D-glucose 6-phosphate: step 3/4. It participates in antibiotic biosynthesis; kanamycin biosynthesis. In terms of biological role, catalyzes the oxidation of 2-deoxy-scyllo-inosamine (DOIA) with NAD(+) or NADP(+), forming 3-amino-2,3-dideoxy-scyllo-inosose (amino-DOI). The chain is 2-deoxy-scyllo-inosamine dehydrogenase (kanE) from Streptomyces kanamyceticus.